A 227-amino-acid polypeptide reads, in one-letter code: Agamous-like MADS-box protein AGL17 (227 aa).

The region spanning Arg3–Phe57 is the MADS-box domain. A K-box domain is found at Val86 to Glu176.

Preferentially expressed in roots.

The protein resides in the nucleus. Functionally, probable transcription factor. This is Agamous-like MADS-box protein AGL17 (AGL17) from Arabidopsis thaliana (Mouse-ear cress).